We begin with the raw amino-acid sequence, 149 residues long: Transcriptional repressor NrdR (149 aa).

Residues 3–34 (CPFCSIQETKVIDSRLVADGHQVRRRRECTMC) fold into a zinc finger. An ATP-cone domain is found at 49 to 139 (PRVVKRDGSR…VYRSFEDIRE (91 aa)).

It belongs to the NrdR family. It depends on Zn(2+) as a cofactor.

Functionally, negatively regulates transcription of bacterial ribonucleotide reductase nrd genes and operons by binding to NrdR-boxes. The polypeptide is Transcriptional repressor NrdR (Pseudoalteromonas atlantica (strain T6c / ATCC BAA-1087)).